The following is a 512-amino-acid chain: Circadian clock oscillator protein KaiC (512 aa).

KaiC domains lie at 1-243 (MQFP…ISIF) and 257-512 (VRVS…SSED). ATP contacts are provided by glycine 45, threonine 46, glycine 47, lysine 48, threonine 49, serine 85, lysine 220, leucine 221, arginine 222, threonine 224, histidine 226, threonine 286, glycine 287, threonine 288, glycine 289, lysine 290, threonine 291, and leucine 292. Threonine 49 serves as a coordination point for Mg(2+). Threonine 291 contacts Mg(2+). Glutamate 314 contributes to the Mg(2+) binding site. An ATP-binding site is contributed by tryptophan 327. At serine 427 the chain carries Phosphoserine; by autocatalysis. Threonine 428 bears the Phosphothreonine; by autocatalysis mark. Positions 447, 453, 454, 455, 457, 459, and 461 each coordinate ATP.

It belongs to the KaiC family. In terms of assembly, homohexamer; hexamerization is dependent on ATP-binding. The KaiABC complex composition changes during the circadian cycle to control KaiC phosphorylation. Complexes KaiC(6), KaiA(2-4):KaiC(6), KaiB(6):KaiC(6) and KaiC(6):KaiB(6):KaiA(12) are among the most important forms, many form cooperatively. KaiC interacts with SasA, activating its autokinase function and leading to RpaA activation. Mg(2+) serves as cofactor. Post-translationally, phosphorylated on serine and threonine residues by autocatalysis. Has a 4 step phosphorylation cycle; the autokinase acts first on Thr-428, then Ser-427. When Ser-427 is modified KaiC switches to an autophosphatase mode, acting first on phospho-Thr-428 then phospho-Ser-427.

The catalysed reaction is L-seryl-[protein] + ATP = O-phospho-L-seryl-[protein] + ADP + H(+). It carries out the reaction L-threonyl-[protein] + ATP = O-phospho-L-threonyl-[protein] + ADP + H(+). The enzyme catalyses ATP + H2O = ADP + phosphate + H(+). Its activity is regulated as follows. The interaction with KaiA enhances its phosphorylation status, while the interaction with KaiB decreases it. Its function is as follows. Central component of the KaiABC oscillator complex, which constitutes the main circadian regulator in cyanobacteria. Complex composition changes during the circadian cycle to control KaiC phosphorylation. KaiA stimulates KaiC autophosphorylation, while KaiB sequesters KaiA, leading to KaiC autodephosphorylation. Clock output pathways impact the RpaA transcriptional regulator. KaiC enhances the autophosphorylation activity of SasA, which then transfers its phosphate group to RpaA to activate it. KaiB and KaiC together enhance the phospho-RpaA dephosphatase activity of CikA. In terms of biological role, has a weak, temperature-independent ATPase activity; ATPase activity defines the circadian period. The phosphorylation state of KaiC modulates its ATPase activity and effects KaiB binding. The polypeptide is Circadian clock oscillator protein KaiC (Parasynechococcus marenigrum (strain WH8102)).